We begin with the raw amino-acid sequence, 582 residues long: ATP-dependent lipid A-core flippase (582 aa).

The next 5 helical transmembrane spans lie at L16–L36, I63–F83, I153–V173, P253–P273, and V275–M295. The ABC transmembrane type-1 domain maps to I28–R310. Residues I342–L578 enclose the ABC transporter domain. Residue G376–S383 participates in ATP binding.

This sequence belongs to the ABC transporter superfamily. Lipid exporter (TC 3.A.1.106) family. As to quaternary structure, homodimer.

The protein resides in the cell inner membrane. The enzyme catalyses ATP + H2O + lipid A-core oligosaccharideSide 1 = ADP + phosphate + lipid A-core oligosaccharideSide 2.. Involved in lipopolysaccharide (LPS) biosynthesis. Translocates lipid A-core from the inner to the outer leaflet of the inner membrane. Transmembrane domains (TMD) form a pore in the inner membrane and the ATP-binding domain (NBD) is responsible for energy generation. The chain is ATP-dependent lipid A-core flippase from Sodalis glossinidius (strain morsitans).